The primary structure comprises 169 residues: MLRRKPIDAGQLDLQEKVVEVRRVTKVVKGGRNFRFAALVVVGDENGHVGIGAGKAMEVPDAIKKAVEDAKKNLIVVPIVGTTIPHEVRGHFGAGNILIMPAVEGTGVIAGGPARAVLELAGLKDVRAKSLGSNNPRNMVNATIEGLNSLKTVEDIAKLRGKKVEELLG.

An S5 DRBM domain is found at 14–77 (LQEKVVEVRR…EDAKKNLIVV (64 aa)).

This sequence belongs to the universal ribosomal protein uS5 family. In terms of assembly, part of the 30S ribosomal subunit. Contacts proteins S4 and S8.

Its function is as follows. With S4 and S12 plays an important role in translational accuracy. Located at the back of the 30S subunit body where it stabilizes the conformation of the head with respect to the body. In Clostridioides difficile (strain 630) (Peptoclostridium difficile), this protein is Small ribosomal subunit protein uS5.